A 285-amino-acid polypeptide reads, in one-letter code: MAPPSRRECPFPSRRFPGLFLAALALLLSSRSDACGPPPTFVAMELTSRPKPYYKVGEQVEYDCKKGYHHFAPFLTHTVCDRNHTWLPISDAPCVKKVCHYIPNPAHGQAILANGTYSFGNQLHFICNDGYYLIGKAILYCELKGSDAVWSGRPPICQKILCKPPPTIKNGKHTFSEVDVFEYLDAVTYSCDPAPGPDPFSLVGESTIYCRDSLGWSGDPPECKVVKCRFPVIENGRQTAGFGIKFYYNAAVMFECYEGFHIIGSDTIVCNSNSTWDPPVPKCVK.

The signal sequence occupies residues 1 to 34 (MAPPSRRECPFPSRRFPGLFLAALALLLSSRSDA). 4 Sushi domains span residues 35–96 (CGPP…PCVK), 97–159 (KVCH…ICQK), 160–225 (ILCK…ECKV), and 226–285 (VKCR…KCVK). 6 disulfide bridges follow: C99–C141, C127–C157, C162–C210, C191–C223, C228–C270, and C256–C283. Residue N114 is glycosylated (N-linked (GlcNAc...) asparagine). O-linked (GalNAc...) threonine glycosylation is found at T167 and T207.

In terms of assembly, interacts with C3b. Interacts with C4b. Interacts with moesin/MSN. In terms of processing, N-glycosylated. Probably less N-glycosylated in testis. As to expression, present in blood and sperm. Isoform 2, but not isoform 1, is present at the erythrocyte membrane (at protein level).

It is found in the cytoplasmic vesicle. It localises to the secretory vesicle. Its subcellular location is the acrosome inner membrane. Its function is as follows. Acts as a cofactor for complement factor I, a serine protease which protects autologous cells against complement-mediated injury by cleaving C3b and C4b deposited on host tissue. May be involved in the fusion of the spermatozoa with the oocyte during fertilization. Also acts as a costimulatory factor for T-cells which induces the differentiation of CD4+ into T-regulatory 1 cells. T-regulatory 1 cells suppress immune responses by secreting interleukin-10, and therefore are thought to prevent autoimmunity. The protein is Membrane cofactor protein (CD46) of Saimiri sciureus (Common squirrel monkey).